Consider the following 457-residue polypeptide: Argininosuccinate lyase (457 aa).

It belongs to the lyase 1 family. Argininosuccinate lyase subfamily.

Its subcellular location is the cytoplasm. The enzyme catalyses 2-(N(omega)-L-arginino)succinate = fumarate + L-arginine. It participates in amino-acid biosynthesis; L-arginine biosynthesis; L-arginine from L-ornithine and carbamoyl phosphate: step 3/3. This is Argininosuccinate lyase from Shigella flexneri serotype 5b (strain 8401).